The primary structure comprises 138 residues: uncharacterized protein (138 aa).

2 disordered regions span residues 1-23 (MPES…MLSE) and 35-83 (ASPS…EDPV). The segment covering 60–69 (DEETIPEEDD) has biased composition (acidic residues).

This is an uncharacterized protein from Schizosaccharomyces pombe (strain 972 / ATCC 24843) (Fission yeast).